We begin with the raw amino-acid sequence, 424 residues long: Geranylgeranyl pyrophosphate synthase D (424 aa).

Positions 42–73 are disordered; that stretch reads PSATWPSVPKVHKRNRSTSLSDQQTAKKAHAN. A compositionally biased stretch (polar residues) spans 58-67; the sequence is STSLSDQQTA. Isopentenyl diphosphate contacts are provided by K147, R150, and H179. D186 and D190 together coordinate Mg(2+). R195 contacts dimethylallyl diphosphate. R196 serves as a coordination point for isopentenyl diphosphate. Residues K274, T275, Q311, K328, and K338 each coordinate dimethylallyl diphosphate.

This sequence belongs to the FPP/GGPP synthase family. Mg(2+) serves as cofactor.

It is found in the cytoplasm. The catalysed reaction is isopentenyl diphosphate + dimethylallyl diphosphate = (2E)-geranyl diphosphate + diphosphate. It catalyses the reaction isopentenyl diphosphate + (2E)-geranyl diphosphate = (2E,6E)-farnesyl diphosphate + diphosphate. It carries out the reaction isopentenyl diphosphate + (2E,6E)-farnesyl diphosphate = (2E,6E,10E)-geranylgeranyl diphosphate + diphosphate. Its pathway is isoprenoid biosynthesis; farnesyl diphosphate biosynthesis; farnesyl diphosphate from geranyl diphosphate and isopentenyl diphosphate: step 1/1. It functions in the pathway isoprenoid biosynthesis; geranyl diphosphate biosynthesis; geranyl diphosphate from dimethylallyl diphosphate and isopentenyl diphosphate: step 1/1. The protein operates within isoprenoid biosynthesis; geranylgeranyl diphosphate biosynthesis; geranylgeranyl diphosphate from farnesyl diphosphate and isopentenyl diphosphate: step 1/1. Its function is as follows. Catalyzes the trans-addition of the 3 molecules of isopentenyl diphosphate (IPP) onto dimethylallyl diphosphate (DMAPP) to form geranylgeranyl pyrophosphate (GGDP). This Phomopsis amygdali (Fusicoccum amygdali) protein is Geranylgeranyl pyrophosphate synthase D (GGS-D).